Here is a 241-residue protein sequence, read N- to C-terminus: 3-oxoacyl-[acyl-carrier-protein] reductase FabG (241 aa).

Residues 13 to 16 (GASG), Ser38, 57 to 58 (EI), and Asn83 contribute to the NADP(+) site. Residue Ser135 participates in substrate binding. The Proton acceptor role is filled by Tyr148. NADP(+) is bound by residues 148 to 152 (YCASK) and Ile181.

The protein belongs to the short-chain dehydrogenases/reductases (SDR) family. As to quaternary structure, homotetramer.

The enzyme catalyses a (3R)-hydroxyacyl-[ACP] + NADP(+) = a 3-oxoacyl-[ACP] + NADPH + H(+). It functions in the pathway lipid metabolism; fatty acid biosynthesis. Catalyzes the NADPH-dependent reduction of beta-ketoacyl-ACP substrates to beta-hydroxyacyl-ACP products, the first reductive step in the elongation cycle of fatty acid biosynthesis. In Rickettsia felis (strain ATCC VR-1525 / URRWXCal2) (Rickettsia azadi), this protein is 3-oxoacyl-[acyl-carrier-protein] reductase FabG (fabG).